The primary structure comprises 371 residues: NADP-dependent oxidoreductase lnaE (371 aa).

Residues 172 to 175, Lys-198, Tyr-214, Asn-237, 277 to 283, and 307 to 309 contribute to the NADP(+) site; these read DEIG, YGTIAEQ, and FGL.

It belongs to the NADP-dependent oxidoreductase L4BD family.

The protein operates within secondary metabolite biosynthesis. Its function is as follows. NADP-dependent oxidoreductase; part of the lna gene cluster that mediates the biosynthesis of diastereomeric piperazines. Lna and lnb clusters encode sets of enzymes that produce overlapping sets of previously undescribed metabolites such as piperazinomycin-like metabolites or morpholine. The lna and lnb biosynthetic pathways appear to be part of a signaling network that controls the formation of sclerotia, a resilient overwintering structure. One primary function of the non-canonical nonribosomal peptide synthetases lnaA and lnbA consists in the reduction of L-tyrosine. The presence in the clusters of tailoring enzymes such as the oxidoreductases lnaB, lnbB, lnaE or lnbE, as well as of the cytochrome P450 monooxygenases lnaC, lnaD, or lnbC, might explain formation of various diastereomeric piperazines. The chain is NADP-dependent oxidoreductase lnaE from Aspergillus flavus (strain ATCC 200026 / FGSC A1120 / IAM 13836 / NRRL 3357 / JCM 12722 / SRRC 167).